We begin with the raw amino-acid sequence, 838 residues long: Protein P (838 aa).

A terminal protein domain (TP) region spans residues 1–179; that stretch reads MPLSYQHFRK…FCGSPYSWEQ (179 aa). The interval 180–341 is spacer; sequence ELQHSQRHGD…YCLSHLVNLR (162 aa). The disordered stretch occupies residues 219–245; the sequence is GLQPHQGPLASSQPGRSGSIRARAHPS. The interval 342-685 is polymerase/reverse transcriptase domain (RT); that stretch reads EDWGPCDDHG…YMNLYPVARQ (344 aa). A Reverse transcriptase domain is found at 352–595; that stretch reads EHHIRIPRTP…YSLNFMGYII (244 aa). Mg(2+) is bound by residues Asp-424, Asp-546, and Asp-547.

Belongs to the hepadnaviridae P protein family.

It catalyses the reaction DNA(n) + a 2'-deoxyribonucleoside 5'-triphosphate = DNA(n+1) + diphosphate. It carries out the reaction Endonucleolytic cleavage to 5'-phosphomonoester.. Its activity is regulated as follows. Activated by host HSP70 and HSP40 in vitro to be able to bind the epsilon loop of the pgRNA. Because deletion of the RNase H region renders the protein partly chaperone-independent, the chaperones may be needed indirectly to relieve occlusion of the RNA-binding site by this domain. Inhibited by several reverse-transcriptase inhibitors: Lamivudine, Adefovir and Entecavir. Functionally, multifunctional enzyme that converts the viral RNA genome into dsDNA in viral cytoplasmic capsids. This enzyme displays a DNA polymerase activity that can copy either DNA or RNA templates, and a ribonuclease H (RNase H) activity that cleaves the RNA strand of RNA-DNA heteroduplexes in a partially processive 3'- to 5'-endonucleasic mode. Neo-synthesized pregenomic RNA (pgRNA) are encapsidated together with the P protein, and reverse-transcribed inside the nucleocapsid. Initiation of reverse-transcription occurs first by binding the epsilon loop on the pgRNA genome, and is initiated by protein priming, thereby the 5'-end of (-)DNA is covalently linked to P protein. Partial (+)DNA is synthesized from the (-)DNA template and generates the relaxed circular DNA (RC-DNA) genome. After budding and infection, the RC-DNA migrates in the nucleus, and is converted into a plasmid-like covalently closed circular DNA (cccDNA). The activity of P protein does not seem to be necessary for cccDNA generation, and is presumably released from (+)DNA by host nuclear DNA repair machinery. The chain is Protein P from Hepatitis B virus genotype A2 subtype adw (isolate Japan/Nishioka/1983) (HBV-A).